A 339-amino-acid polypeptide reads, in one-letter code: DnaJ homolog subfamily C member 22 (339 aa).

The TM2 domain occupies 4 to 50 (GLLMTYVLWALGGPVGLHHLYLGRDSHALLWMLTLGGGGLGWLWEFW). Helical transmembrane passes span 5-25 (LLMT…HLYL), 30-50 (HALL…WEFW), 81-101 (FASQ…SLSS), 105-125 (FYIV…AAVG), 135-155 (LGAA…ILPI), 185-205 (VGLA…YNTA), and 218-238 (FLSW…VLLL). A J domain is found at 277-339 (LAHQVLGVPE…LSQPKKPRAS (63 aa)).

The protein resides in the membrane. May function as a co-chaperone. This Mus musculus (Mouse) protein is DnaJ homolog subfamily C member 22 (Dnajc22).